Consider the following 70-residue polypeptide: U2-agatoxin-Ao1q (70 aa).

An N-terminal signal peptide occupies residues 1-20 (MRSIISLLLISAMVFSMIAA). Positions 21–34 (VPEEEGLQLSEDER) are excised as a propeptide. 2 disulfides stabilise this stretch: C44–C58 and C52–C68. L69 is modified (leucine amide).

Belongs to the neurotoxin 01 (U2-agtx) family. In terms of processing, does not contain a cysteine at position 53 which disrupts the cysteine framework. In terms of tissue distribution, expressed by the venom gland.

The protein resides in the secreted. Insect active toxin causing rapid but reversible paralysis in crickets. No activity shown in mammals. Does not show effect on mammalian voltage-gated calcium channels. The protein is U2-agatoxin-Ao1q of Agelena orientalis (Funnel-web spider).